The primary structure comprises 178 residues: Ribonuclease M5 (178 aa).

The region spanning 10–103 is the Toprim domain; that stretch reads DGVIVCEGKT…NSTKIGVAEA (94 aa). Mg(2+)-binding residues include Glu16, Asp62, and Asp64.

Belongs to the ribonuclease M5 family. Mg(2+) is required as a cofactor.

The protein localises to the cytoplasm. It catalyses the reaction Endonucleolytic cleavage of RNA, removing 21 and 42 nucleotides, respectively, from the 5'- and 3'-termini of a 5S-rRNA precursor.. In terms of biological role, required for correct processing of both the 5' and 3' ends of 5S rRNA precursor. Cleaves both sides of a double-stranded region yielding mature 5S rRNA in one step. This is Ribonuclease M5 from Mycoplasma pneumoniae (strain ATCC 29342 / M129 / Subtype 1) (Mycoplasmoides pneumoniae).